The sequence spans 397 residues: DNA excision repair protein ERCC-8 (397 aa).

WD repeat units lie at residues 41–81, 97–137, 184–224, 243–282, and 332–371; these read IHCS…RQPY, VHKY…IADV, GHRQ…GCLI, AHNG…NTLV, and GHYK…SVPD. Residues 370 to 397 form a disordered region; sequence PDDDDETSTRSQLNPAFEDAWSSSDEEG. Serine 391, serine 392, and serine 393 each carry phosphoserine.

Part of the CSA complex (also named DCX(ERCC8) complex), a DCX E3 ubiquitin-protein ligase complex containing ERCC8, RBX1, DDB1 and CUL4A; the CSA complex interacts with RNA polymerase II; upon UV irradiation it interacts with the COP9 signalosome and preferentially with the hyperphosphorylated form of RNA polymerase II. Interacts with ERCC6/CSB (via CIM motif); promoting recruitment to lesion-stalled RNA polymerase II (Pol II). Interacts with KIAA1530/UVSSA. Interacts with a subunit of RNA polymerase II TFIIH.

The protein localises to the nucleus. It localises to the chromosome. The protein resides in the nucleus matrix. Its pathway is protein modification; protein ubiquitination. Functionally, substrate-recognition component of the CSA complex, a DCX (DDB1-CUL4-X-box) E3 ubiquitin-protein ligase complex, involved in transcription-coupled nucleotide excision repair (TC-NER), a process during which RNA polymerase II-blocking lesions are rapidly removed from the transcribed strand of active genes. Following recruitment to lesion-stalled RNA polymerase II (Pol II), the CSA complex mediates ubiquitination of Pol II subunit POLR2A/RPB1 at 'Lys-1268', a critical TC-NER checkpoint, governing RNA Pol II stability and initiating DNA damage excision by TFIIH recruitment. The CSA complex also promotes the ubiquitination and subsequent proteasomal degradation of ERCC6/CSB in a UV-dependent manner; ERCC6 degradation is essential for the recovery of RNA synthesis after transcription-coupled repair. Also plays a role in DNA double-strand breaks (DSSBs) repair by non-homologous end joining (NHEJ). The protein is DNA excision repair protein ERCC-8 (ERCC8) of Bos taurus (Bovine).